Here is a 301-residue protein sequence, read N- to C-terminus: MSNGSVPVSGIGGRGDGEGSSQVHMESTGGMDRAKVFAVYGKGGIGKSTTSSNLAVAFSQLGKRVLQIGCDPKHDSTFTLTKRLVPTVIDSLEEVDFHMEELRPEDYVYEGYNGVLCVEAGGPPAGTGCGGYVVGQTVKLLKQHHLLEETDVVIFDVLGDVVCGGFAAPLQHADQALIVTANDFDSIFAMNRIAGAIQAKAKNYKVRLGGVIANRSERTDQIDRINERIGLRTLAHVPNYDVVRRSRLHKSTLFELEEQSEELERVRDEYLSLAAALWNGVDPLSPSPLKDREVFDLLGFD.

The disordered stretch occupies residues 1-26 (MSNGSVPVSGIGGRGDGEGSSQVHME). Residues 44–49 (GIGKST) and Lys73 contribute to the ATP site. Ser48 serves as a coordination point for Mg(2+). [4Fe-4S] cluster contacts are provided by Cys129 and Cys163. Residue 214–215 (NR) participates in ATP binding.

It belongs to the NifH/BchL/ChlL family. As to quaternary structure, homodimer. Protochlorophyllide reductase is composed of three subunits; BchL, BchN and BchB. Requires [4Fe-4S] cluster as cofactor.

It carries out the reaction chlorophyllide a + oxidized 2[4Fe-4S]-[ferredoxin] + 2 ADP + 2 phosphate = protochlorophyllide a + reduced 2[4Fe-4S]-[ferredoxin] + 2 ATP + 2 H2O. Its pathway is porphyrin-containing compound metabolism; bacteriochlorophyll biosynthesis (light-independent). In terms of biological role, component of the dark-operative protochlorophyllide reductase (DPOR) that uses Mg-ATP and reduced ferredoxin to reduce ring D of protochlorophyllide (Pchlide) to form chlorophyllide a (Chlide). This reaction is light-independent. The L component serves as a unique electron donor to the NB-component of the complex, and binds Mg-ATP. The sequence is that of Light-independent protochlorophyllide reductase iron-sulfur ATP-binding protein from Halorhodospira halophila (strain DSM 244 / SL1) (Ectothiorhodospira halophila (strain DSM 244 / SL1)).